The sequence spans 395 residues: Tyrosine--tRNA ligase 2 (395 aa).

A 'HIGH' region motif is present at residues 42–51 (PTAPDIHLGH). Residues 226–230 (KMSKS) carry the 'KMSKS' region motif. Position 229 (Lys-229) interacts with ATP. The region spanning 334–394 (TPVANLLKDA…GKRKFARITI (61 aa)) is the S4 RNA-binding domain.

This sequence belongs to the class-I aminoacyl-tRNA synthetase family. TyrS type 2 subfamily. In terms of assembly, homodimer.

Its subcellular location is the cytoplasm. The catalysed reaction is tRNA(Tyr) + L-tyrosine + ATP = L-tyrosyl-tRNA(Tyr) + AMP + diphosphate + H(+). Its function is as follows. Catalyzes the attachment of tyrosine to tRNA(Tyr) in a two-step reaction: tyrosine is first activated by ATP to form Tyr-AMP and then transferred to the acceptor end of tRNA(Tyr). The protein is Tyrosine--tRNA ligase 2 of Vibrio parahaemolyticus serotype O3:K6 (strain RIMD 2210633).